We begin with the raw amino-acid sequence, 1468 residues long: MPYSSQQNGYTSASTSRLSEQTSSHSRSSREDRHLTEKGRRPPSPEARHRSDRDYDRRRSTEYVRDDDYRRSSRSSHDSRYADAYDHWRSARSAYSPTPRDDRRDEARNDLSSTKRHRSPEHSTSRLRHRSPESAHRRQNGTANRLDSKPDRGGDRKTGEALDSGRSRWSQRAYEYDDWRNERPSARYERYRHDREPHRSRREDEYETKRSRDDSNGNSIYAPTRRSRSRSRSRSRSRDRYRSRDHSRERRRERSRDRSNGTYSSRDDRRPKADRSAHTIKRDEHSTRLNGTSEDSKDLRHESQRRVSASVQSASEGPASTPVARAVYIKHAEVDQEAPAPPTTRDYHSCPQRWPDQADSAVRASSAPNGSATAPSRSDRPPANGSSGRHSPRSLPTREKAEEARTSSTRRPSSQTNDNVNNSRDPLTQRKATSERSFGHVLLPHELPVECRGKNYMATATYKEGVKSIYKSAADKHLVDVDTRDPRRLGKKSSRYRESLHSASFRWDSNSRGKKPLPPPRNLVLTNLSGLLQPHQILLHILPHGRIESSKLEIDPKIGQSLGIFRVTFAHDFDEHGKPLESMPAGQNPQHGAKVAKAACLALNGRMIGQTRAQAFLDRDGEVIAERIKAKLAENEHKLRPTIVPPAPPAAASSSPATPSTTKQSMPPPQVPRGPKVFMPAAPSPSYASSPASARANTDRYEYSATSHSRYRSSYEESRKLASSETYHRRRGTEEYDTYNRSKPYADAQVPAGSRSETRKDIKRPDEEILNELRDKKRPYVHIPRPKNCDIDVTSVEAQLRSTAPIWVREGQKGFYAAFHTSKEANQCKVVNETLTIGGYTLQVDVRSAPSQHAPSQQIRTPSGKHASVPLSMPAPPKQERKAIDTGLRPPTADEKLKVDWSAAELQDAVFRMLQKELADTFVRDVKSRVVGPYLTAYLKPDGEGGKMLAKATMKKPVIPTSINDHGTTLFEATGEARLPSFRKLAGAHPKKKASDADTTTSQAKRDQTDAKKKRGHTHRSKVHRDRDVSSSENESDDMERGMVVAARRNSYTRSKSSTKRRGAAAWLLEASDAEAGTDDVDSTETDALSRSVSASVEPTGEEQIEVDVGAKAKKIPKVKAATVSKKKGTTAARKKLDVAPPEAVVEADQGSETATPETDVPIKTAAAKAKVKPAKTSAKAKSALVDPFEAGLVEDSEDCHYLRLALEHLSRTGELASEHTLPDEIELEVEAEEQAMAAGGIPKHSTGSARTEGYYRIPPEQKAMHLPDRNKATEDVDTSSNAQILQSARNNRADSRRLVLGIEQHKRETATDTDIFKFNQLRTRKKQLKFAKSPIHDWGLYAMELIPAGDMVIEYVGEVVRQQVADEREKQYERQGNFSTYLFRVDDDLVVDATHKGNIARLMNHCCTPNCNAKILTLNGEKRIVLFAKTAIRAGEELTYDYKFQSSADDEDAIPCLCGSPGCRRFL.

Residues 1-11 are compositionally biased toward polar residues; it reads MPYSSQQNGYT. Disordered regions lie at residues 1 to 439, 636 to 737, 848 to 884, 986 to 1103, and 1141 to 1162; these read MPYS…RSFG, EHKL…EEYD, SAPS…RKAI, AGAH…TGEE, and PPEA…TDVP. The span at 12–26 shows a compositional bias: low complexity; it reads SASTSRLSEQTSSHS. 6 stretches are compositionally biased toward basic and acidic residues: residues 28–40, 46–89, 99–109, 120–136, 146–166, and 174–215; these read SSRE…EKGR, EARH…DHWR, PRDDRRDEARN, PEHS…ESAH, LDSK…DSGR, and YEYD…RDDS. Over residues 225–235 the composition is skewed to basic residues; sequence RRSRSRSRSRS. 2 stretches are compositionally biased toward basic and acidic residues: residues 236–287 and 294–305; these read RSRD…EHST and EDSKDLRHESQR. 2 stretches are compositionally biased toward polar residues: residues 306–315 and 366–376; these read RVSASVQSAS and SAPNGSATAPS. The span at 396–405 shows a compositional bias: basic and acidic residues; the sequence is PTREKAEEAR. Low complexity predominate over residues 406-416; sequence TSSTRRPSSQT. A compositionally biased stretch (polar residues) spans 417-426; sequence NDNVNNSRDP. Composition is skewed to low complexity over residues 650 to 662 and 680 to 694; these read AAAS…PSTT and PAAP…PASA. Positions 713-722 are enriched in basic and acidic residues; that stretch reads SSYEESRKLA. Residues 849–861 show a composition bias toward polar residues; it reads APSQHAPSQQIRT. The span at 1012–1024 shows a compositional bias: basic residues; it reads KKKRGHTHRSKVH. The span at 1072 to 1085 shows a compositional bias: acidic residues; the sequence is SDAEAGTDDVDSTE. The segment covering 1086–1097 has biased composition (polar residues); that stretch reads TDALSRSVSASV. Positions 1293 to 1298 match the RxxxRR motif motif; that stretch reads RADSRR. An SET domain is found at 1327–1444; the sequence is KQLKFAKSPI…AGEELTYDYK (118 aa). An S-adenosyl-L-methionine-binding site is contributed by Tyr-1443. Positions 1453 to 1468 constitute a Post-SET domain; it reads DAIPCLCGSPGCRRFL.

The protein belongs to the class V-like SAM-binding methyltransferase superfamily. In terms of assembly, component of the Set1C/COMPASS complex.

The protein resides in the nucleus. The protein localises to the chromosome. It catalyses the reaction L-lysyl(4)-[histone H3] + 3 S-adenosyl-L-methionine = N(6),N(6),N(6)-trimethyl-L-lysyl(4)-[histone H3] + 3 S-adenosyl-L-homocysteine + 3 H(+). The catalysed reaction is N(6)-methyl-L-lysyl(4)-[histone H3] + S-adenosyl-L-methionine = N(6),N(6)-dimethyl-L-lysyl(4)-[histone H3] + S-adenosyl-L-homocysteine + H(+). It carries out the reaction N(6),N(6)-dimethyl-L-lysyl(4)-[histone H3] + S-adenosyl-L-methionine = N(6),N(6),N(6)-trimethyl-L-lysyl(4)-[histone H3] + S-adenosyl-L-homocysteine + H(+). Its function is as follows. Catalytic component of the COMPASS (Set1C) complex that specifically mono-, di- and trimethylates histone H3 to form H3K4me1/2/3. Binds RNAs which might negatively affect its histone methyltransferase activity. COMPASS recognizes ubiquitinated H2B on one face of the nucleosome which stimulates the methylation of H3 on the opposing face. The protein is Histone-lysine N-methyltransferase, H3 lysine-4 specific (SET1) of Mycosarcoma maydis (Corn smut fungus).